A 95-amino-acid polypeptide reads, in one-letter code: Small ribosomal subunit protein uS17 (95 aa).

It belongs to the universal ribosomal protein uS17 family. Part of the 30S ribosomal subunit.

Functionally, one of the primary rRNA binding proteins, it binds specifically to the 5'-end of 16S ribosomal RNA. This chain is Small ribosomal subunit protein uS17, found in Psychrobacter sp. (strain PRwf-1).